The primary structure comprises 218 residues: Outer-membrane lipoprotein LolB (218 aa).

Residues 1–20 form the signal peptide; that stretch reads MSQVIRTLALTGLALAGLSG. Residue C21 is the site of N-palmitoyl cysteine attachment. Residue C21 is the site of S-diacylglycerol cysteine attachment.

It belongs to the LolB family. Monomer.

Its subcellular location is the cell outer membrane. Its function is as follows. Plays a critical role in the incorporation of lipoproteins in the outer membrane after they are released by the LolA protein. This Xanthomonas campestris pv. campestris (strain 8004) protein is Outer-membrane lipoprotein LolB.